A 275-amino-acid polypeptide reads, in one-letter code: Large ribosomal subunit protein uL2 (275 aa).

Residues 221–275 form a disordered region; sequence RGTAMNPVDHPHGGGEGRTGEGRVPVNPWGQPTKGYRTRSNKRTNSMIVQRRHKR. Residues 229 to 241 are compositionally biased toward basic and acidic residues; it reads DHPHGGGEGRTGE.

Belongs to the universal ribosomal protein uL2 family. Part of the 50S ribosomal subunit. Forms a bridge to the 30S subunit in the 70S ribosome.

Its function is as follows. One of the primary rRNA binding proteins. Required for association of the 30S and 50S subunits to form the 70S ribosome, for tRNA binding and peptide bond formation. It has been suggested to have peptidyltransferase activity; this is somewhat controversial. Makes several contacts with the 16S rRNA in the 70S ribosome. This Dechloromonas aromatica (strain RCB) protein is Large ribosomal subunit protein uL2.